Reading from the N-terminus, the 120-residue chain is Cu-Zn superoxide dismutase-like protein OPG175 (120 aa).

Cys-52 and Cys-102 are disulfide-bonded.

It belongs to the Cu-Zn superoxide dismutase family.

Its subcellular location is the virion. The protein localises to the host cytoplasm. Its function is as follows. Superoxide dismutase-like protein with no enzymatic activity. This chain is Cu-Zn superoxide dismutase-like protein OPG175 (OPG175), found in Vaccinia virus (strain Tashkent) (VACV).